The following is a 20-amino-acid chain: Equinatoxin-1 (20 aa).

The interval 3–12 (AVAGAVIEGA) is plays an important role in the hemolytic activity. The segment at 11 to 20 (GASLTFNVLQ) is N-terminal region.

This sequence belongs to the actinoporin family. Sea anemone subfamily. In terms of assembly, octamer or nonamer in membranes. Monomer in the soluble state.

The protein resides in the secreted. It localises to the nematocyst. The protein localises to the target cell membrane. In terms of biological role, pore-forming protein that forms cations-selective hydrophilic pores of around 1 nm and causes cardiac stimulation and cytolysis. Pore formation is a multi-step process that involves specific recognition of membrane sphingomyelin (but neither cholesterol nor phosphatidylcholine) using aromatic rich region and adjacent phosphocholine (POC) binding site, firm binding to the membrane (mainly driven by hydrophobic interactions) accompanied by the transfer of the N-terminal region to the lipid-water interface and finally pore formation after oligomerization of monomers. Cytolytic effects include red blood cells hemolysis, platelet aggregation and lysis, cytotoxic and cytostatic effects on fibroblasts. Lethality in mammals has been ascribed to severe vasospasm of coronary vessels, cardiac arrhythmia, and inotropic effects. The chain is Equinatoxin-1 from Actinia equina (Beadlet anemone).